The chain runs to 985 residues: Exocyst complex component 4 (985 aa).

The stretch at 36–70 (SETTEERQKEKQKIEAEFKRSDLRLNELVSRHDQQ) forms a coiled coil. Phosphoserine is present on residues Ser-235, Ser-456, Ser-459, Ser-682, and Ser-686. Positions 434–480 (DKSSHVGTSNNSDAFKEHRRNASDASVDDNLAGQLGGSGKGSTSGLF) are disordered.

Belongs to the SEC8 family. In terms of assembly, the exocyst complex is composed of Sec3/Exoc1, Sec5/Exoc2, Sec6/Exoc3, Sec8/Exoc4, Sec10/Exoc5, Sec15/Exoc6, exo70/Exoc7 and Exo84/Exoc8. As to expression, abundant in the embryonic and larval glutamatergic neuromuscular junctions (NMJs), pre and postsynaptically.

Its function is as follows. Component of the exocyst complex involved in the docking of exocytic vesicles with fusion sites on the plasma membrane. Involved in regulation of synaptic microtubule formation, and also regulation of synaptic growth and glutamate receptor trafficking. Does not appear to be required for basal neurotransmission. The protein is Exocyst complex component 4 of Drosophila melanogaster (Fruit fly).